We begin with the raw amino-acid sequence, 158 residues long: 2-C-methyl-D-erythritol 2,4-cyclodiphosphate synthase (158 aa).

A divalent metal cation contacts are provided by aspartate 9 and histidine 11. 4-CDP-2-C-methyl-D-erythritol 2-phosphate is bound by residues 9-11 (DVH) and 35-36 (HS). Position 43 (histidine 43) interacts with a divalent metal cation. Residues 57–59 (DIG), 62–66 (FPDTD), 133–136 (TTTE), phenylalanine 140, and arginine 143 each bind 4-CDP-2-C-methyl-D-erythritol 2-phosphate.

Belongs to the IspF family. As to quaternary structure, homotrimer. A divalent metal cation is required as a cofactor.

The catalysed reaction is 4-CDP-2-C-methyl-D-erythritol 2-phosphate = 2-C-methyl-D-erythritol 2,4-cyclic diphosphate + CMP. The protein operates within isoprenoid biosynthesis; isopentenyl diphosphate biosynthesis via DXP pathway; isopentenyl diphosphate from 1-deoxy-D-xylulose 5-phosphate: step 4/6. Functionally, involved in the biosynthesis of isopentenyl diphosphate (IPP) and dimethylallyl diphosphate (DMAPP), two major building blocks of isoprenoid compounds. Catalyzes the conversion of 4-diphosphocytidyl-2-C-methyl-D-erythritol 2-phosphate (CDP-ME2P) to 2-C-methyl-D-erythritol 2,4-cyclodiphosphate (ME-CPP) with a corresponding release of cytidine 5-monophosphate (CMP). This is 2-C-methyl-D-erythritol 2,4-cyclodiphosphate synthase from Geobacillus kaustophilus (strain HTA426).